A 396-amino-acid polypeptide reads, in one-letter code: Potassium channel subfamily K member 9 (396 aa).

At 1-8 (MKRQNVRT) the chain is on the cytoplasmic side. The chain crosses the membrane as a helical span at residues 9–29 (LSLIACTFTYLLVGAAVFDAL). Residues 30-88 (ESDHEMREEEKLKAEEVRLRGKYNISSDDYQQLELVILQSEPHRAGVQWKFAGSFYFAI) lie on the Extracellular side of the membrane. Residue N53 is glycosylated (N-linked (GlcNAc...) asparagine). The segment at residues 89–101 (TVITTIGYGHAAP) is an intramembrane region (pore-forming). K(+)-binding residues include T93, I94, G95, and Y96. Positions 93–98 (TIGYGH) are selectivity filter 1. Residues 102–107 (GTDAGK) lie on the Extracellular side of the membrane. The chain crosses the membrane as a helical span at residues 108–128 (AFCMFYAVLGIPLTLVMFQSL). At 129–158 (GERMNTFVRYLLKRIKKCCGMRNTEVSMEN) the chain is on the cytoplasmic side. The helical transmembrane segment at 159–179 (MVTVGFFSCMGTLCLGAAAFS) threads the bilayer. Topologically, residues 180-194 (QCEDWSFFHAYYYCF) are extracellular. Residues 195-207 (ITLTTIGFGDFVA) constitute an intramembrane region (pore-forming). Residues T199, I200, G201, and F202 each coordinate K(+). The tract at residues 199–204 (TIGFGD) is selectivity filter 2. At 208-218 (LQSKGALQRKP) the chain is on the extracellular side. The helical transmembrane segment at 219–239 (FYVAFSFMYILVGLTVIGAFL) threads the bilayer. Over 240–396 (NLVVLRFLTM…HRLHIRRKSI (157 aa)) the chain is Cytoplasmic. Residues 243-248 (VLRFLT) are X-gate.

Belongs to the two pore domain potassium channel (TC 1.A.1.8) family. In terms of assembly, homodimer. Heterodimer with KCNK1. Heterodimer with KCNK3. As to expression, highly expressed in the CNS and at lower levels in the colon, kidney, liver, lung, spleen, stomach and skeletal muscle. The highest expression was found in the olfactory nuclei, piriform cortex, cerebellum, antedorsal thalmic nucleus, pontine nucleus, dorsal raphe and several nuclei in the medulla. Shows a non-homogeneous distribution in the hippocampus. Expressed at highest levels in the lateral posterior and inferior portions and at medium levels in neocortex. Expressed in motoneurons, including hypoglossal motoneurons (at protein level).

The protein resides in the cell membrane. It is found in the mitochondrion inner membrane. Its subcellular location is the cell projection. It localises to the dendrite. It catalyses the reaction K(+)(in) = K(+)(out). The catalysed reaction is Na(+)(in) = Na(+)(out). Its activity is regulated as follows. Activated by halothane and isoflurane. Inhibited by external acidification, diacylglycerol, anandamide and AGT/angiotensin II. Ruthenium red inhibits homomeric but not KCNK3:KCNK9 heteromeric channels. K(+) channel that conducts voltage-dependent outward rectifying currents upon membrane depolarization. Voltage sensing is coupled to K(+) electrochemical gradient in an 'ion flux gating' mode where outward but not inward ion flow opens the gate. Changes ion selectivity and becomes permeable to Na(+) ions in response to extracellular acidification. Protonation of the pH sensor His-98 stabilizes C-type inactivation conformation likely converting the channel from outward K(+)-conducting, to inward Na(+)-conducting to nonconductive state. Homo- and heterodimerizes to form functional channels with distinct regulatory and gating properties. Allows K(+) currents with fast-gating kinetics important for the repolarization and hyperpolarization phases of action potentials. In granule neurons, hyperpolarizes the resting membrane potential to limit intrinsic neuronal excitability, but once the action potential threshold is reached, supports high-frequency action potential firing and increased neuronal excitability. Homomeric and/or heteromeric KCNK3:KCNK9 channels operate in cerebellar granule cells, whereas heteromeric KCNK1:KCNK9 enables currents in hippocampal dentate gyrus granule neurons. Dispensable for central chemosensory respiration i.e. breathing controlled by brainstem CO2/pH, it rather conducts pH-sensitive currents and controls the firing rate of serotonergic raphe neurons involved in potentiation of the respiratory chemoreflex. In retinal ganglion cells, mediates outward rectifying currents that regulate action potentials in response to acidification of the synaptic cleft. Involved in transmission of image-forming and nonimage-forming visual information in the retina. In adrenal gland, contributes to the maintenance of a hyperpolarized resting membrane potential of aldosterone-producing cells at zona glomerulosa and limits aldosterone release as part of a regulatory mechanism that controls arterial blood pressure and electrolyte homeostasis. In Rattus norvegicus (Rat), this protein is Potassium channel subfamily K member 9.